The following is a 95-amino-acid chain: Aspartyl/glutamyl-tRNA(Asn/Gln) amidotransferase subunit C (95 aa).

It belongs to the GatC family. As to quaternary structure, heterotrimer of A, B and C subunits.

It catalyses the reaction L-glutamyl-tRNA(Gln) + L-glutamine + ATP + H2O = L-glutaminyl-tRNA(Gln) + L-glutamate + ADP + phosphate + H(+). It carries out the reaction L-aspartyl-tRNA(Asn) + L-glutamine + ATP + H2O = L-asparaginyl-tRNA(Asn) + L-glutamate + ADP + phosphate + 2 H(+). Its function is as follows. Allows the formation of correctly charged Asn-tRNA(Asn) or Gln-tRNA(Gln) through the transamidation of misacylated Asp-tRNA(Asn) or Glu-tRNA(Gln) in organisms which lack either or both of asparaginyl-tRNA or glutaminyl-tRNA synthetases. The reaction takes place in the presence of glutamine and ATP through an activated phospho-Asp-tRNA(Asn) or phospho-Glu-tRNA(Gln). In Bartonella bacilliformis (strain ATCC 35685 / KC583 / Herrer 020/F12,63), this protein is Aspartyl/glutamyl-tRNA(Asn/Gln) amidotransferase subunit C.